The following is a 233-amino-acid chain: uncharacterized protein (233 aa).

The disordered stretch occupies residues 21–43; sequence RWRTATSADHPRRGRPAAQAVRR.

This is an uncharacterized protein from Mycobacterium tuberculosis (strain CDC 1551 / Oshkosh).